Reading from the N-terminus, the 195-residue chain is Small ribosomal subunit protein uS7 (195 aa).

It belongs to the universal ribosomal protein uS7 family. As to quaternary structure, part of the 30S ribosomal subunit.

One of the primary rRNA binding proteins, it binds directly to 16S rRNA where it nucleates assembly of the head domain of the 30S subunit. Is located at the subunit interface close to the decoding center. The polypeptide is Small ribosomal subunit protein uS7 (Sulfolobus acidocaldarius (strain ATCC 33909 / DSM 639 / JCM 8929 / NBRC 15157 / NCIMB 11770)).